Reading from the N-terminus, the 563-residue chain is Adenine deaminase (563 aa).

It belongs to the metallo-dependent hydrolases superfamily. Adenine deaminase family. It depends on Mn(2+) as a cofactor.

It carries out the reaction adenine + H2O + H(+) = hypoxanthine + NH4(+). The protein is Adenine deaminase of Brucella anthropi (strain ATCC 49188 / DSM 6882 / CCUG 24695 / JCM 21032 / LMG 3331 / NBRC 15819 / NCTC 12168 / Alc 37) (Ochrobactrum anthropi).